Consider the following 763-residue polypeptide: Protein translocase subunit SecA 2 (763 aa).

Residues Gln-83, 101–105 (GEGKT), and Asp-490 contribute to the ATP site.

It belongs to the SecA family. As to quaternary structure, monomer and homodimer. Part of the essential Sec protein translocation apparatus which comprises SecA, SecYEG and auxiliary proteins SecDF. Other proteins may also be involved.

It localises to the cell membrane. It is found in the cytoplasm. The enzyme catalyses ATP + H2O + cellular proteinSide 1 = ADP + phosphate + cellular proteinSide 2.. Functionally, part of the Sec protein translocase complex. Interacts with the SecYEG preprotein conducting channel. Has a central role in coupling the hydrolysis of ATP to the transfer of proteins into and across the cell membrane, serving as an ATP-driven molecular motor driving the stepwise translocation of polypeptide chains across the membrane. This Corynebacterium glutamicum (strain R) protein is Protein translocase subunit SecA 2.